Reading from the N-terminus, the 391-residue chain is NADH-quinone oxidoreductase subunit D (391 aa).

The protein belongs to the complex I 49 kDa subunit family. In terms of assembly, NDH-1 is composed of 14 different subunits. Subunits NuoB, C, D, E, F, and G constitute the peripheral sector of the complex.

The protein resides in the cell inner membrane. The catalysed reaction is a quinone + NADH + 5 H(+)(in) = a quinol + NAD(+) + 4 H(+)(out). NDH-1 shuttles electrons from NADH, via FMN and iron-sulfur (Fe-S) centers, to quinones in the respiratory chain. The immediate electron acceptor for the enzyme in this species is believed to be ubiquinone. Couples the redox reaction to proton translocation (for every two electrons transferred, four hydrogen ions are translocated across the cytoplasmic membrane), and thus conserves the redox energy in a proton gradient. This chain is NADH-quinone oxidoreductase subunit D, found in Rickettsia conorii (strain ATCC VR-613 / Malish 7).